Here is a 120-residue protein sequence, read N- to C-terminus: Testis-expressed protein 48 (120 aa).

Positions 29-45 (KVPSQTQEHKPSTQNLL) are enriched in polar residues. The interval 29 to 86 (KVPSQTQEHKPSTQNLLLQKDELDRQNPKRINAVSHLPSRTPLIQTKKSTSSSSSEFE) is disordered. The segment covering 74 to 83 (TKKSTSSSSS) has biased composition (low complexity).

The polypeptide is Testis-expressed protein 48 (Homo sapiens (Human)).